The chain runs to 208 residues: MRAVIPYKKAGAKSRLSPVLSLEEREEFVELMLNQVIDSLRGAGIEKIDILSPSVYGLEDMTKARVLLDEDDLNEALNRYLAGSEEPVLIVMADLPLLAPAHIKGISSTEKDVCIVPGKGGGTNALFIKNPSRYRVKYYGSSFLTHCSIATDTGQNFEIYDSFLAGTDIDEPEDLVELLIHGKGPAKEYISRKFRLEVSRGRVGLVLL.

The protein belongs to the CofC family. Homodimer.

The enzyme catalyses (2S)-2-phospholactate + GTP + H(+) = (2S)-lactyl-2-diphospho-5'-guanosine + diphosphate. The protein operates within cofactor biosynthesis; coenzyme F420 biosynthesis. Functionally, guanylyltransferase that catalyzes the activation of (2S)-2-phospholactate (2-PL) as (2S)-lactyl-2-diphospho-5'-guanosine, via the condensation of 2-PL with GTP. It is involved in the biosynthesis of coenzyme F420, a hydride carrier cofactor. In Methanosarcina acetivorans (strain ATCC 35395 / DSM 2834 / JCM 12185 / C2A), this protein is 2-phospho-L-lactate guanylyltransferase.